A 360-amino-acid chain; its full sequence is Phosphate acyltransferase (360 aa).

A compositionally biased stretch (basic and acidic residues) spans 296–305; sequence STLRREHLDR. Residues 296–360 are disordered; sequence STLRREHLDR…LRTAEPPGSL (65 aa). Over residues 314–333 the composition is skewed to basic residues; that stretch reads PRQRRRPRRQKRRAACRPRP. A compositionally biased stretch (low complexity) spans 334–350; the sequence is RSAAGRAPGSGVRGAAG.

Belongs to the PlsX family. As to quaternary structure, homodimer. Probably interacts with PlsY.

It localises to the cytoplasm. It carries out the reaction a fatty acyl-[ACP] + phosphate = an acyl phosphate + holo-[ACP]. Its pathway is lipid metabolism; phospholipid metabolism. Functionally, catalyzes the reversible formation of acyl-phosphate (acyl-PO(4)) from acyl-[acyl-carrier-protein] (acyl-ACP). This enzyme utilizes acyl-ACP as fatty acyl donor, but not acyl-CoA. The sequence is that of Phosphate acyltransferase from Deinococcus radiodurans (strain ATCC 13939 / DSM 20539 / JCM 16871 / CCUG 27074 / LMG 4051 / NBRC 15346 / NCIMB 9279 / VKM B-1422 / R1).